The primary structure comprises 73 residues: Translation initiation factor IF-1 (73 aa).

The S1-like domain maps to 1 to 72; sequence MAKEDHIEMA…SKGRIIFRDK (72 aa).

It belongs to the IF-1 family. As to quaternary structure, component of the 30S ribosomal translation pre-initiation complex which assembles on the 30S ribosome in the order IF-2 and IF-3, IF-1 and N-formylmethionyl-tRNA(fMet); mRNA recruitment can occur at any time during PIC assembly.

Its subcellular location is the cytoplasm. Its function is as follows. One of the essential components for the initiation of protein synthesis. Stabilizes the binding of IF-2 and IF-3 on the 30S subunit to which N-formylmethionyl-tRNA(fMet) subsequently binds. Helps modulate mRNA selection, yielding the 30S pre-initiation complex (PIC). Upon addition of the 50S ribosomal subunit IF-1, IF-2 and IF-3 are released leaving the mature 70S translation initiation complex. The sequence is that of Translation initiation factor IF-1 from Legionella pneumophila (strain Paris).